The primary structure comprises 460 residues: N-myc proto-oncogene protein (460 aa).

The segment at 19–47 (LEFDSLQPCFYPDEDDFYFGGPDSTPPGE) is interaction with AURKA. The interaction with AURKA and FBXW7 stretch occupies residues 61–90 (LSPSRAFSEQSPEPSDWATEMLLPEADLWG). Positions 76–85 (DWATEMLLPE) match the 9aaTAD motif. Disordered regions lie at residues 131–169 (VSEK…GAGR), 221–288 (AAAP…SNSK), and 330–388 (APSP…LERQ). The segment covering 138–158 (GRGPPAAGPATPGAGAANPAG) has biased composition (low complexity). Residues 159–169 (RGHGGTAGAGR) are compositionally biased toward gly residues. Over residues 221-233 (AAAPASAAVAAPP) the composition is skewed to low complexity. Residues 255–274 (TLSDSDDEDDEEEDEEEEID) are compositionally biased toward acidic residues. Phosphoserine; by CK2 is present on residues S257 and S259. Residues 377 to 429 (ERRRNHNILERQRRNDLRSSFLTLRDHVPELVKNEKAAKVVILKKATEYVHSL) form the bHLH domain. Residues 429–450 (LQAEEHQLLLEKEKLQARQQQL) form a leucine-zipper region.

As to quaternary structure, efficient DNA binding requires dimerization with another bHLH protein. Binds DNA as a heterodimer with MAX. Interacts with KDM5A, KDM5B and HUWE1. Interacts with MYCNOS. Interacts with AURKA; interaction is phospho-independent and triggers AURKA activation; AURKA competes with FBXW7 for binding to unphosphorylated MYCN but not for binding to unphosphorylated MYCN. Interacts with FBXW7; FBXW7 competes with AURKA for binding to unphosphorylated MYCN but not for binding to phosphorylated MYCN. Phosphorylated by GSK3-beta which may promote its degradation. Phosphorylated by AURKA.

Its subcellular location is the nucleus. Positively regulates the transcription of MYCNOS in neuroblastoma cells. The polypeptide is N-myc proto-oncogene protein (MYCN) (Marmota monax (Woodchuck)).